We begin with the raw amino-acid sequence, 102 residues long: Protein RnfH (102 aa).

The protein belongs to the UPF0125 (RnfH) family.

The polypeptide is Protein RnfH (Pseudomonas entomophila (strain L48)).